Consider the following 141-residue polypeptide: Putative pre-16S rRNA nuclease (141 aa).

Belongs to the YqgF nuclease family.

The protein localises to the cytoplasm. Functionally, could be a nuclease involved in processing of the 5'-end of pre-16S rRNA. This is Putative pre-16S rRNA nuclease from Cupriavidus necator (strain ATCC 17699 / DSM 428 / KCTC 22496 / NCIMB 10442 / H16 / Stanier 337) (Ralstonia eutropha).